Reading from the N-terminus, the 127-residue chain is SH2 domain-containing protein 1A (127 aa).

In terms of domain architecture, SH2 spans 6–102; it reads VYHGKISRET…GIVIPLQYPV (97 aa). Positions 67 to 92 are interaction with FYN SH3 domain; it reads ETAPGVHKRYFRKIKNLISAFQKPDQ. Position 89 is an N6-acetyllysine (K89). Residues 104-127 are disordered; it reads KSSPRSTQGTTGIREDPDVCLKAP. Residues 116-127 are compositionally biased toward basic and acidic residues; that stretch reads IREDPDVCLKAP.

In terms of assembly, interacts with CD84, CD244, LY9, SLAMF1 and FYN. Interacts with NTRK1, NTRK2 and NTRK3.

Its subcellular location is the cytoplasm. Functionally, cytoplasmic adapter regulating receptors of the signaling lymphocytic activation molecule (SLAM) family such as SLAMF1, CD244, LY9, CD84, SLAMF6 and SLAMF7. In SLAM signaling seems to cooperate with SH2D1B/EAT-2. Initially it has been proposed that association with SLAMF1 prevents SLAMF1 binding to inhibitory effectors including INPP5D/SHIP1 and PTPN11/SHP-2. However, by simultaneous interactions, recruits FYN which subsequently phosphorylates and activates SLAMF1. Positively regulates CD244/2B4- and CD84-mediated natural killer (NK) cell functions. Can also promote CD48-, SLAMF6 -, LY9-, and SLAMF7-mediated NK cell activation. In the context of NK cell-mediated cytotoxicity enhances conjugate formation with target cells. May also regulate the activity of the neurotrophin receptors NTRK1, NTRK2 and NTRK3. This Saguinus oedipus (Cotton-top tamarin) protein is SH2 domain-containing protein 1A (SH2D1A).